The following is a 527-amino-acid chain: ARS-binding protein 2 (527 aa).

3 disordered regions span residues 160-184, 219-265, and 282-344; these read PDVN…HSAS, SHHM…NSHN, and IDPD…IKRL. Residues 164 to 177 show a composition bias toward low complexity; it reads SSSISTMRTSTSPS. Residues 225–239 are compositionally biased toward polar residues; the sequence is RGSQQAHQTTPQNHS. A compositionally biased stretch (basic and acidic residues) spans 284 to 303; sequence PDWHQWPDDLRDVSSPKESD. A phosphoserine mark is found at Ser-297, Ser-298, and Ser-302. Positions 328 to 343 are enriched in basic residues; that stretch reads PRKRGRPPGARNKIKR.

Its subcellular location is the nucleus. Binds, preferentially, to the Maundrell ARS consensus sequence within ARS3002. This Schizosaccharomyces pombe (strain 972 / ATCC 24843) (Fission yeast) protein is ARS-binding protein 2 (abp2).